Consider the following 442-residue polypeptide: Glutamate-1-semialdehyde 2,1-aminomutase (442 aa).

K282 is modified (N6-(pyridoxal phosphate)lysine).

The protein belongs to the class-III pyridoxal-phosphate-dependent aminotransferase family. HemL subfamily. In terms of assembly, homodimer. It depends on pyridoxal 5'-phosphate as a cofactor.

The protein resides in the cytoplasm. It carries out the reaction (S)-4-amino-5-oxopentanoate = 5-aminolevulinate. The protein operates within porphyrin-containing compound metabolism; protoporphyrin-IX biosynthesis; 5-aminolevulinate from L-glutamyl-tRNA(Glu): step 2/2. This chain is Glutamate-1-semialdehyde 2,1-aminomutase, found in Polaromonas sp. (strain JS666 / ATCC BAA-500).